Reading from the N-terminus, the 405-residue chain is uncharacterized protein (405 aa).

The first 20 residues, 1 to 20, serve as a signal peptide directing secretion; sequence MKAKLALSIIGLVLASLVAG. Position 21 is an N-acetylcysteine (C21). A lipid anchor (S-archaeol cysteine) is attached at C21.

It belongs to the BMP lipoprotein family.

The protein resides in the cell membrane. This is an uncharacterized protein from Pyrococcus horikoshii (strain ATCC 700860 / DSM 12428 / JCM 9974 / NBRC 100139 / OT-3).